The following is a 456-amino-acid chain: Cysteine synthase 2 (456 aa).

A helical membrane pass occupies residues 9 to 29 (VYGTVALTAAFAAGILVTLGF).

This sequence belongs to the cysteine synthase/cystathionine beta-synthase family. It depends on pyridoxal 5'-phosphate as a cofactor.

It localises to the mitochondrion outer membrane. It catalyses the reaction O-acetyl-L-serine + hydrogen sulfide = L-cysteine + acetate. Its function is as follows. Putative cysteine synthase that catalyzes the conversion of O-acetyl-L-serine (OAS) into cysteine, the last step in the cysteine biosynthesis pathway. However, in contrast to cysteine synthase cys-17, this CS-like protein may not function in cysteine biosynthesis. In Neurospora crassa (strain ATCC 24698 / 74-OR23-1A / CBS 708.71 / DSM 1257 / FGSC 987), this protein is Cysteine synthase 2.